The following is a 350-amino-acid chain: S-adenosylmethionine:tRNA ribosyltransferase-isomerase (350 aa).

This sequence belongs to the QueA family. As to quaternary structure, monomer.

It localises to the cytoplasm. It carries out the reaction 7-aminomethyl-7-carbaguanosine(34) in tRNA + S-adenosyl-L-methionine = epoxyqueuosine(34) in tRNA + adenine + L-methionine + 2 H(+). It functions in the pathway tRNA modification; tRNA-queuosine biosynthesis. Transfers and isomerizes the ribose moiety from AdoMet to the 7-aminomethyl group of 7-deazaguanine (preQ1-tRNA) to give epoxyqueuosine (oQ-tRNA). The protein is S-adenosylmethionine:tRNA ribosyltransferase-isomerase of Bacillus cereus (strain G9842).